The following is a 75-amino-acid chain: DNA-directed RNA polymerase subunit epsilon (75 aa).

This sequence belongs to the RNA polymerase subunit epsilon family. In terms of assembly, RNAP is composed of a core of 2 alpha, a beta and a beta' subunit. The core is associated with a delta subunit, and at least one of epsilon or omega. When a sigma factor is associated with the core the holoenzyme is formed, which can initiate transcription.

The enzyme catalyses RNA(n) + a ribonucleoside 5'-triphosphate = RNA(n+1) + diphosphate. A non-essential component of RNA polymerase (RNAP). The protein is DNA-directed RNA polymerase subunit epsilon of Lactobacillus gasseri (strain ATCC 33323 / DSM 20243 / BCRC 14619 / CIP 102991 / JCM 1131 / KCTC 3163 / NCIMB 11718 / NCTC 13722 / AM63).